A 147-amino-acid chain; its full sequence is Large ribosomal subunit protein uL15 (147 aa).

Residues 1-54 (MRLSDIKPTPGSMKKRTRVGRGIGSGKGKTSGKGHKGQKARGRGKVHPWFEGGQ) form a disordered region. Residues 30-46 (TSGKGHKGQKARGRGKV) show a composition bias toward basic residues.

The protein belongs to the universal ribosomal protein uL15 family. In terms of assembly, part of the 50S ribosomal subunit.

Functionally, binds to the 23S rRNA. The protein is Large ribosomal subunit protein uL15 of Thermosipho melanesiensis (strain DSM 12029 / CIP 104789 / BI429).